We begin with the raw amino-acid sequence, 156 residues long: ADP-ribosylation factor-like protein 2-binding protein (156 aa).

The protein belongs to the ARL2BP family.

Its subcellular location is the cytoplasm. The protein resides in the mitochondrion intermembrane space. The protein localises to the cytoskeleton. It localises to the microtubule organizing center. It is found in the centrosome. Its subcellular location is the nucleus. The protein resides in the spindle. The protein localises to the cilium basal body. Functionally, plays a role as an effector of the ADP-ribosylation factor-like protein 2, ARL2. This is ADP-ribosylation factor-like protein 2-binding protein (ARL2BP) from Gallus gallus (Chicken).